The following is a 234-amino-acid chain: Fibrillarin-like rRNA/tRNA 2'-O-methyltransferase (234 aa).

S-adenosyl-L-methionine contacts are provided by residues 90-91 (TT), 109-110 (EF), 134-135 (DA), and 154-157 (DIAQ).

It belongs to the methyltransferase superfamily. Fibrillarin family. In terms of assembly, interacts with nop5. Component of box C/D small ribonucleoprotein (sRNP) particles that contain rpl7ae, FlpA and nop5, plus a guide RNA.

In terms of biological role, involved in pre-rRNA and tRNA processing. Utilizes the methyl donor S-adenosyl-L-methionine to catalyze the site-specific 2'-hydroxyl methylation of ribose moieties in rRNA and tRNA. Site specificity is provided by a guide RNA that base pairs with the substrate. Methylation occurs at a characteristic distance from the sequence involved in base pairing with the guide RNA. The polypeptide is Fibrillarin-like rRNA/tRNA 2'-O-methyltransferase (Staphylothermus marinus (strain ATCC 43588 / DSM 3639 / JCM 9404 / F1)).